We begin with the raw amino-acid sequence, 350 residues long: Biotin synthase (350 aa).

Residues 42–269 form the Radical SAM core domain; it reads NEVQVSTLCS…QSHVRLSAGR (228 aa). Positions 57, 61, and 64 each coordinate [4Fe-4S] cluster. The [2Fe-2S] cluster site is built by Cys-101, Cys-132, Cys-192, and Arg-264.

It belongs to the radical SAM superfamily. Biotin synthase family. In terms of assembly, homodimer. [4Fe-4S] cluster is required as a cofactor. Requires [2Fe-2S] cluster as cofactor.

The enzyme catalyses (4R,5S)-dethiobiotin + (sulfur carrier)-SH + 2 reduced [2Fe-2S]-[ferredoxin] + 2 S-adenosyl-L-methionine = (sulfur carrier)-H + biotin + 2 5'-deoxyadenosine + 2 L-methionine + 2 oxidized [2Fe-2S]-[ferredoxin]. It participates in cofactor biosynthesis; biotin biosynthesis; biotin from 7,8-diaminononanoate: step 2/2. Its function is as follows. Catalyzes the conversion of dethiobiotin (DTB) to biotin by the insertion of a sulfur atom into dethiobiotin via a radical-based mechanism. This Saccharophagus degradans (strain 2-40 / ATCC 43961 / DSM 17024) protein is Biotin synthase.